The primary structure comprises 188 residues: Elongation factor P (188 aa).

This sequence belongs to the elongation factor P family.

The protein localises to the cytoplasm. It participates in protein biosynthesis; polypeptide chain elongation. In terms of biological role, involved in peptide bond synthesis. Stimulates efficient translation and peptide-bond synthesis on native or reconstituted 70S ribosomes in vitro. Probably functions indirectly by altering the affinity of the ribosome for aminoacyl-tRNA, thus increasing their reactivity as acceptors for peptidyl transferase. In Natranaerobius thermophilus (strain ATCC BAA-1301 / DSM 18059 / JW/NM-WN-LF), this protein is Elongation factor P.